Here is a 380-residue protein sequence, read N- to C-terminus: Cytochrome b (380 aa).

4 helical membrane-spanning segments follow: residues 34–54 (FGSLLAVCLITQILTGLLLAM), 78–99 (WLIRNLHANGASFFFICIFLHI), 114–134 (WNTGVILLLTLMATAFVGYVL), and 179–199 (FFALHFLLPFVIAGITIIHLT). Residues His-84 and His-98 each contribute to the heme b site. The heme b site is built by His-183 and His-197. His-202 lines the a ubiquinone pocket. Transmembrane regions (helical) follow at residues 227 to 247 (IKDILGLALMFIPFLTLTLFS), 289 to 309 (LGGVLALAASVLILLLIPFLH), 321 to 341 (LSQTLFWLLVANLLILTWIGS), and 348 to 368 (FIIIGQMASLSYFSILLILFP).

It belongs to the cytochrome b family. The cytochrome bc1 complex contains 11 subunits: 3 respiratory subunits (MT-CYB, CYC1 and UQCRFS1), 2 core proteins (UQCRC1 and UQCRC2) and 6 low-molecular weight proteins (UQCRH/QCR6, UQCRB/QCR7, UQCRQ/QCR8, UQCR10/QCR9, UQCR11/QCR10 and a cleavage product of UQCRFS1). This cytochrome bc1 complex then forms a dimer. Requires heme b as cofactor.

The protein resides in the mitochondrion inner membrane. Its function is as follows. Component of the ubiquinol-cytochrome c reductase complex (complex III or cytochrome b-c1 complex) that is part of the mitochondrial respiratory chain. The b-c1 complex mediates electron transfer from ubiquinol to cytochrome c. Contributes to the generation of a proton gradient across the mitochondrial membrane that is then used for ATP synthesis. The sequence is that of Cytochrome b (MT-CYB) from Alectoris graeca (Rock partridge).